Here is a 635-residue protein sequence, read N- to C-terminus: Replication factor C small subunit (635 aa).

Residue 51 to 58 (GPPGTGKT) participates in ATP binding.

The protein belongs to the activator 1 small subunits family. RfcS subfamily. In terms of assembly, heteromultimer composed of small subunits (RfcS) and large subunits (RfcL). Post-translationally, this protein undergoes a protein self splicing that involves a post-translational excision of the intervening region (intein) followed by peptide ligation.

Its function is as follows. Part of the RFC clamp loader complex which loads the PCNA sliding clamp onto DNA. The chain is Replication factor C small subunit (rfcS) from Methanopyrus kandleri (strain AV19 / DSM 6324 / JCM 9639 / NBRC 100938).